The primary structure comprises 1594 residues: Transcription factor Gibbin (1594 aa).

Disordered regions lie at residues 19–111, 149–241, 256–307, and 367–464; these read PDYL…RHWD, LRLS…LADA, QLLE…DPLG, and CSPH…RKGK. Positions 30-47 are enriched in pro residues; the sequence is GGPPTPRPLLPTRPPASP. Residue K79 is modified to N6-acetyllysine. The segment covering 165 to 177 has biased composition (polar residues); the sequence is SFFSSPSLANSIR. The segment covering 178–193 has biased composition (basic and acidic residues); that stretch reads SPEERANPHTKSERPS. Positions 228–240 are enriched in acidic residues; that stretch reads PEPDGPDYSELAD. Phosphoserine is present on S267. The segment covering 272–303 has biased composition (low complexity); that stretch reads PQLLDPQPRFLDPQALEPLGEGLELPPLQPLA. Basic residues predominate over residues 391–401; that stretch reads ILCRRRKAGRG. Positions 395-407 form a DNA-binding region, a.T hook 1; it reads RRKAGRGRKADSG. Residues 427-447 show a composition bias toward pro residues; it reads EPPPLPPPPPPTLSGPGPVPE. The segment at residues 541-553 is a DNA-binding region (a.T hook 2); the sequence is KRKRGRPPKNLLL. The tract at residues 578 to 604 is disordered; the sequence is MPEVKKRRRRKQKLASPQPSYAADAND. A Phosphoserine modification is found at S593. K606 participates in a covalent cross-link: Glycyl lysine isopeptide (Lys-Gly) (interchain with G-Cter in SUMO2). The interval 714-789 is disordered; the sequence is LTELGHPRKR…PGGQAGRNCG (76 aa). Positions 734–743 are enriched in basic residues; the sequence is KPKRKRRSRK. 2 positions are modified to phosphoserine: S825 and S842. R887 is subject to Omega-N-methylarginine. S892 is modified (phosphoserine). The tract at residues 942–967 is disordered; it reads KLAPPPSAVARSPTTHPPANTYPPQY. At S1060 the chain carries Phosphoserine. Disordered regions lie at residues 1152–1191 and 1245–1306; these read VSET…QSSL and STSA…PDLG. Low complexity-rich tracts occupy residues 1153–1168, 1180–1191, and 1245–1264; these read SETF…QFSQ, SEASSSEGQSSL, and STSA…PRQP. At S1180 the chain carries Phosphoserine. Phosphoserine occurs at positions 1315, 1317, and 1392. T1394 is subject to Phosphothreonine. S1396 bears the Phosphoserine mark. K1402 is covalently cross-linked (Glycyl lysine isopeptide (Lys-Gly) (interchain with G-Cter in SUMO2)). The disordered stretch occupies residues 1495–1525; the sequence is HLASPPATPKADKEPLEMARPPGPPRGPAAA. 2 positions are modified to phosphoserine: S1498 and S1540.

The protein resides in the nucleus. The protein localises to the chromosome. In terms of biological role, transcription factor required for the proper patterning of the epidermis, which plays a key role in early epithelial morphogenesis. Directly binds promoter and enhancer regions and acts by maintaining local enhancer-promoter chromatin architecture. Interacts with many sequence-specific zinc-finger transcription factors and methyl-CpG-binding proteins to regulate the expression of mesoderm genes that wire surface ectoderm stratification. The polypeptide is Transcription factor Gibbin (Mus musculus (Mouse)).